The primary structure comprises 591 residues: L-lactate dehydrogenase (cytochrome) (591 aa).

Residues 1 to 80 (MLKYKPLLKI…LNWHNGQIDN (80 aa)) constitute a mitochondrion transit peptide. The 78-residue stretch at 88-165 (KQKISPAEVA…APEKKLGPLQ (78 aa)) folds into the Cytochrome b5 heme-binding domain. The heme b site is built by H123, H146, Y177, Q219, and Y223. Residues 197-563 (PPLDNIINLY…KPDLLDLSTL (367 aa)) enclose the FMN hydroxy acid dehydrogenase domain. Residue Y223 participates in pyruvate binding. FMN is bound by residues 275–278 (SATA), S308, and Q332. Y334 is a pyruvate binding site. T360 is an FMN binding site. K376 is a binding site for heme b. Residue K429 participates in FMN binding. Pyruvate is bound by residues H453 and R456. The active-site Proton acceptor is H453. FMN-binding positions include 489–493 (DGGVR) and 512–513 (GR).

In the N-terminal section; belongs to the cytochrome b5 family. This sequence in the C-terminal section; belongs to the FMN-dependent alpha-hydroxy acid dehydrogenase family. In terms of assembly, homotetramer. FMN serves as cofactor. The cofactor is heme b.

It is found in the mitochondrion intermembrane space. It carries out the reaction (S)-lactate + 2 Fe(III)-[cytochrome c] = 2 Fe(II)-[cytochrome c] + pyruvate + 2 H(+). Its function is as follows. Catalyzes the oxidation of (S)-lactate (L-lactate) to pyruvate with subsequent transfer of electrons to cytochrome c. Is involved in the utilization of (S)-lactate as a sole source of carbon for growth. Can also use ferricyanide as an electron acceptor in vitro. The sequence is that of L-lactate dehydrogenase (cytochrome) (CYB2) from Saccharomyces cerevisiae (strain ATCC 204508 / S288c) (Baker's yeast).